The primary structure comprises 377 residues: Chaperone protein DnaJ (377 aa).

A J domain is found at 5–70 (DYYEILGVSK…EKRSAYDQYG (66 aa)). Residues 131 to 209 (GVVREICVPT…CRGSGRIERT (79 aa)) form a CR-type zinc finger. Zn(2+)-binding residues include C144, C147, C161, C164, C183, C186, C197, and C200. CXXCXGXG motif repeat units follow at residues 144 to 151 (CLQCRGSG), 161 to 168 (CVTCHGHG), 183 to 190 (CPSCNGHG), and 197 to 204 (CNKCRGSG).

Belongs to the DnaJ family. As to quaternary structure, homodimer. Zn(2+) serves as cofactor.

Its subcellular location is the cytoplasm. In terms of biological role, participates actively in the response to hyperosmotic and heat shock by preventing the aggregation of stress-denatured proteins and by disaggregating proteins, also in an autonomous, DnaK-independent fashion. Unfolded proteins bind initially to DnaJ; upon interaction with the DnaJ-bound protein, DnaK hydrolyzes its bound ATP, resulting in the formation of a stable complex. GrpE releases ADP from DnaK; ATP binding to DnaK triggers the release of the substrate protein, thus completing the reaction cycle. Several rounds of ATP-dependent interactions between DnaJ, DnaK and GrpE are required for fully efficient folding. Also involved, together with DnaK and GrpE, in the DNA replication of plasmids through activation of initiation proteins. This Blochmanniella floridana protein is Chaperone protein DnaJ.